We begin with the raw amino-acid sequence, 363 residues long: MMKRKILAAVIPALLAAATANAAEIYNKDGNKLDLYGKAVGRHVWTTTGDSKNADQTYAQIGFKGETQINTDLTGFGQWEYRTKADRAEGEQQNSNLVRLAFAGLKYAEVGSIDYGRNYGIVYDVESYTDMAPYFSGETWGGAYTDNYMTSRAGGLLTYRNSDFFGLVDGLSFGIQYQGKNQDNHSINSQNGDGVGYTMAYEFDGFGVTAAYSNSKRTNDQQDRDGNGDRAESWAVGAKYDANNVYLAAVYAETRNMSIVENTVTDTVEMANKTQNLEVVAQYQFDFGLRPAISYVQSKGKQLNGAGGSADLAKYIQAGATYYFNKNMNVWVDYRFNLLDENDYSSSYVGTDDQAAVGITYQF.

Positions 1–22 are cleaved as a signal peptide; it reads MMKRKILAAVIPALLAAATANA.

Belongs to the Gram-negative porin family. In terms of assembly, homotrimer. Forms mixed heterotrimers with OmpC and with PhoE; other mixed heterotrimers with other porins are also probable.

Its subcellular location is the cell outer membrane. Functionally, forms pores that allow passive diffusion of small molecules across the outer membrane. The sequence is that of Outer membrane porin F from Salmonella typhimurium (strain SL1344).